Consider the following 297-residue polypeptide: Large ribosomal subunit protein uL15m (297 aa).

The transit peptide at 1–22 directs the protein to the mitochondrion; the sequence is MAGPVRGAAGPWALDLLRALPR. Positions 27–68 are disordered; it reads NLRPNPGSRKPERRRRGQRRGRKCGRGHKGERQRGTRPRLGF. The span at 37 to 53 shows a compositional bias: basic residues; that stretch reads PERRRRGQRRGRKCGRG.

Belongs to the universal ribosomal protein uL15 family. In terms of assembly, component of the mitochondrial ribosome large subunit (39S) which comprises a 16S rRNA and about 50 distinct proteins.

It localises to the mitochondrion. This chain is Large ribosomal subunit protein uL15m (MRPL15), found in Bos taurus (Bovine).